The primary structure comprises 251 residues: tRNA (guanine-N(1)-)-methyltransferase (251 aa).

S-adenosyl-L-methionine contacts are provided by residues Gly-122 and 142-147 (IGDYVL). The segment at 226 to 251 (RARRPDLFATRPQPNRQKPPKNTTDG) is disordered. Positions 237–251 (PQPNRQKPPKNTTDG) are enriched in polar residues.

It belongs to the RNA methyltransferase TrmD family. Homodimer.

It is found in the cytoplasm. The enzyme catalyses guanosine(37) in tRNA + S-adenosyl-L-methionine = N(1)-methylguanosine(37) in tRNA + S-adenosyl-L-homocysteine + H(+). Functionally, specifically methylates guanosine-37 in various tRNAs. This Rhodopseudomonas palustris (strain BisB18) protein is tRNA (guanine-N(1)-)-methyltransferase.